Here is a 257-residue protein sequence, read N- to C-terminus: Deoxyribose-phosphate aldolase (257 aa).

Aspartate 102 functions as the Proton donor/acceptor in the catalytic mechanism. Lysine 166 serves as the catalytic Schiff-base intermediate with acetaldehyde. Lysine 198 functions as the Proton donor/acceptor in the catalytic mechanism.

The protein belongs to the DeoC/FbaB aldolase family. DeoC type 2 subfamily.

It localises to the cytoplasm. The enzyme catalyses 2-deoxy-D-ribose 5-phosphate = D-glyceraldehyde 3-phosphate + acetaldehyde. It functions in the pathway carbohydrate degradation; 2-deoxy-D-ribose 1-phosphate degradation; D-glyceraldehyde 3-phosphate and acetaldehyde from 2-deoxy-alpha-D-ribose 1-phosphate: step 2/2. Its function is as follows. Catalyzes a reversible aldol reaction between acetaldehyde and D-glyceraldehyde 3-phosphate to generate 2-deoxy-D-ribose 5-phosphate. This chain is Deoxyribose-phosphate aldolase, found in Shewanella amazonensis (strain ATCC BAA-1098 / SB2B).